The primary structure comprises 449 residues: Putative F-box/LRR-repeat protein At3g44090 (449 aa).

One can recognise an F-box domain in the interval 23–77 (LASMDCLPDDLLVQILYFLPTKEAISTSLLSKRWRTLYSLVHNLDLDDYIFWHHE). LRR repeat units lie at residues 133–163 (YYNL…SLGT), 186–212 (YIWF…TIHH), 214–231 (FRPF…SVTI), 247–278 (TPNV…ELDL), 286–311 (RQVQ…HLTY), and 320–345 (SKKR…VLSG).

In Arabidopsis thaliana (Mouse-ear cress), this protein is Putative F-box/LRR-repeat protein At3g44090.